We begin with the raw amino-acid sequence, 553 residues long: Putative transport protein YidE (553 aa).

Transmembrane regions (helical) follow at residues 4-24 (IALT…IGNV), 28-48 (GIGL…HFVS), 65-85 (FGLI…FFAS), 95-115 (LFAV…HKLF), and 158-178 (MSYA…MWML). 2 RCK C-terminal domains span residues 191-276 (QQHE…VIGQ) and 279-361 (DTSL…VLGN). 6 helical membrane-spanning segments follow: residues 371 to 391 (MLPV…PVFV), 393 to 413 (GFPA…ALIL), 439 to 459 (IVLF…NTLV), 464 to 484 (LSWI…VGIL), 493 to 513 (YLTM…LAFA), and 533 to 553 (LVMF…WSIG).

This sequence belongs to the AAE transporter (TC 2.A.81) family. YidE subfamily.

The protein localises to the cell membrane. This chain is Putative transport protein YidE, found in Escherichia coli (strain ATCC 8739 / DSM 1576 / NBRC 3972 / NCIMB 8545 / WDCM 00012 / Crooks).